Reading from the N-terminus, the 691-residue chain is Elongation factor G (691 aa).

Residues Glu-8–Val-282 enclose the tr-type G domain. GTP is bound by residues Ala-17–Thr-24, Asp-81–His-85, and Asn-135–Asp-138.

The protein belongs to the TRAFAC class translation factor GTPase superfamily. Classic translation factor GTPase family. EF-G/EF-2 subfamily.

The protein localises to the cytoplasm. Functionally, catalyzes the GTP-dependent ribosomal translocation step during translation elongation. During this step, the ribosome changes from the pre-translocational (PRE) to the post-translocational (POST) state as the newly formed A-site-bound peptidyl-tRNA and P-site-bound deacylated tRNA move to the P and E sites, respectively. Catalyzes the coordinated movement of the two tRNA molecules, the mRNA and conformational changes in the ribosome. The sequence is that of Elongation factor G from Prochlorococcus marinus (strain NATL2A).